A 150-amino-acid chain; its full sequence is Large ribosomal subunit protein bL9 (150 aa).

It belongs to the bacterial ribosomal protein bL9 family.

Functionally, binds to the 23S rRNA. This is Large ribosomal subunit protein bL9 from Paraburkholderia phymatum (strain DSM 17167 / CIP 108236 / LMG 21445 / STM815) (Burkholderia phymatum).